The primary structure comprises 203 residues: Outer-membrane lipoprotein carrier protein (203 aa).

The N-terminal stretch at 1 to 21 (MKKWLAISCLIAGVTSTAVYA) is a signal peptide.

Belongs to the LolA family. Monomer.

It localises to the periplasm. Participates in the translocation of lipoproteins from the inner membrane to the outer membrane. Only forms a complex with a lipoprotein if the residue after the N-terminal Cys is not an aspartate (The Asp acts as a targeting signal to indicate that the lipoprotein should stay in the inner membrane). This Pectobacterium atrosepticum (strain SCRI 1043 / ATCC BAA-672) (Erwinia carotovora subsp. atroseptica) protein is Outer-membrane lipoprotein carrier protein.